Here is a 556-residue protein sequence, read N- to C-terminus: Glutamine--tRNA ligase (556 aa).

The 'HIGH' region signature appears at 34–44 (PEPNGYLHIGH). ATP contacts are provided by residues 35–37 (EPN) and 41–47 (HIGHAKS). Positions 67 and 212 each coordinate L-glutamine. ATP is bound by residues threonine 231, 261-262 (RL), and 269-271 (MSK). The 'KMSKS' region signature appears at 268-272 (VMSKR).

This sequence belongs to the class-I aminoacyl-tRNA synthetase family. In terms of assembly, monomer.

The protein resides in the cytoplasm. It catalyses the reaction tRNA(Gln) + L-glutamine + ATP = L-glutaminyl-tRNA(Gln) + AMP + diphosphate. The polypeptide is Glutamine--tRNA ligase (Vibrio vulnificus (strain YJ016)).